Consider the following 362-residue polypeptide: 3-dehydroquinate synthase (362 aa).

Residues 71–76 (DGEQYK), 105–109 (GVIGD), 129–130 (TT), Lys-142, Lys-151, and 169–172 (CLKT) contribute to the NAD(+) site. The Zn(2+) site is built by Glu-184, His-247, and His-264.

This sequence belongs to the sugar phosphate cyclases superfamily. Dehydroquinate synthase family. The cofactor is NAD(+). It depends on Co(2+) as a cofactor. Zn(2+) serves as cofactor.

It localises to the cytoplasm. The enzyme catalyses 7-phospho-2-dehydro-3-deoxy-D-arabino-heptonate = 3-dehydroquinate + phosphate. Its pathway is metabolic intermediate biosynthesis; chorismate biosynthesis; chorismate from D-erythrose 4-phosphate and phosphoenolpyruvate: step 2/7. Catalyzes the conversion of 3-deoxy-D-arabino-heptulosonate 7-phosphate (DAHP) to dehydroquinate (DHQ). The protein is 3-dehydroquinate synthase of Salmonella typhi.